A 179-amino-acid polypeptide reads, in one-letter code: Large ribosomal subunit protein bL17 (179 aa).

The segment at 123–179 is disordered; that stretch reads RTRGTDTLPDTVTDTGPDSAPDPVPGSEPGSAAGDLPDADTAPADPGESSSNQRVIR. Low complexity predominate over residues 154–168; it reads AAGDLPDADTAPADP. Residues 170-179 are compositionally biased toward polar residues; it reads ESSSNQRVIR.

The protein belongs to the bacterial ribosomal protein bL17 family. Part of the 50S ribosomal subunit. Contacts protein L32.

The sequence is that of Large ribosomal subunit protein bL17 from Tropheryma whipplei (strain Twist) (Whipple's bacillus).